Consider the following 368-residue polypeptide: MKAVLGLEDGTVIRGTGFGAEGTACGELVFTTQFTGYEEALTDPSYKGQILMFTYPLIGNYGVSGERFQSDNIHAEGLVVREACKKPYHYKSTRSIHQFLEDEGKPGIEGVDTRMLTIGARERGTMRAALITGSDDGEEAVKVARNFPQITDEELIARVTCKEPHFIPGAECAWKGSGKPKHAVVVDLGIKRNIINNLHKRGIDLTLVPATTKPKEIAGFEPDLLFISNGPGDPEKATDAINAVKAFAGTIPVAGICFGHQIISLAMGARTYKLKFGHRGGNQPVKDLIENKIFISSQNHGYAVDADSLEGTGLYVKYLNANDKTVEGVSHKDLDIFSVQFHPEAQAGPMDTEETFFGKVVKVLGGDL.

The segment at 1 to 178 (MKAVLGLEDG…GAECAWKGSG (178 aa)) is CPSase. 3 residues coordinate L-glutamine: Ser45, Gly230, and Gly232. One can recognise a Glutamine amidotransferase type-1 domain in the interval 182–368 (HAVVVDLGIK…KVVKVLGGDL (187 aa)). Cys257 functions as the Nucleophile in the catalytic mechanism. Residues Phe258, Gln261, Asn299, Gly301, and Tyr302 each contribute to the L-glutamine site. Catalysis depends on residues His342 and Glu344.

This sequence belongs to the CarA family. As to quaternary structure, composed of two chains; the small (or glutamine) chain promotes the hydrolysis of glutamine to ammonia, which is used by the large (or ammonia) chain to synthesize carbamoyl phosphate. Tetramer of heterodimers (alpha,beta)4.

It catalyses the reaction hydrogencarbonate + L-glutamine + 2 ATP + H2O = carbamoyl phosphate + L-glutamate + 2 ADP + phosphate + 2 H(+). The catalysed reaction is L-glutamine + H2O = L-glutamate + NH4(+). It functions in the pathway amino-acid biosynthesis; L-arginine biosynthesis; carbamoyl phosphate from bicarbonate: step 1/1. The protein operates within pyrimidine metabolism; UMP biosynthesis via de novo pathway; (S)-dihydroorotate from bicarbonate: step 1/3. Functionally, small subunit of the glutamine-dependent carbamoyl phosphate synthetase (CPSase). CPSase catalyzes the formation of carbamoyl phosphate from the ammonia moiety of glutamine, carbonate, and phosphate donated by ATP, constituting the first step of 2 biosynthetic pathways, one leading to arginine and/or urea and the other to pyrimidine nucleotides. The small subunit (glutamine amidotransferase) binds and cleaves glutamine to supply the large subunit with the substrate ammonia. The protein is Carbamoyl phosphate synthase small chain of Methanosarcina acetivorans (strain ATCC 35395 / DSM 2834 / JCM 12185 / C2A).